The sequence spans 486 residues: Cardiolipin synthase A (486 aa).

2 helical membrane-spanning segments follow: residues 3–23 and 38–58; these read TFYT…IAGV and MAWL…YLSF. PLD phosphodiesterase domains follow at residues 219 to 246 and 399 to 426; these read MDLR…VDPR and EGGL…DMRS. Active-site residues include His-224, Lys-226, Asp-231, His-404, Lys-406, and Asp-411.

It belongs to the phospholipase D family. Cardiolipin synthase subfamily. ClsA sub-subfamily.

The protein localises to the cell inner membrane. It catalyses the reaction 2 a 1,2-diacyl-sn-glycero-3-phospho-(1'-sn-glycerol) = a cardiolipin + glycerol. In terms of biological role, catalyzes the reversible phosphatidyl group transfer from one phosphatidylglycerol molecule to another to form cardiolipin (CL) (diphosphatidylglycerol) and glycerol. In Klebsiella pneumoniae subsp. pneumoniae (strain ATCC 700721 / MGH 78578), this protein is Cardiolipin synthase A.